Here is a 153-residue protein sequence, read N- to C-terminus: ORM1-like protein 1 (153 aa).

Residues 1–26 (MNVGVAHSEVNPNTRVMNSRGMWLTY) lie on the Cytoplasmic side of the membrane. The next 2 membrane-spanning stretches (helical) occupy residues 27–46 (ALGV…FSVP) and 47–64 (VAWT…YVFL). At 65–100 (HAVKGTPFETPDQGKARLLTHWEQLDYGVQFTSSRK) the chain is on the cytoplasmic side. Residues 101–121 (FFTISPIILYFLASFYTKYDT) traverse the membrane as a helical segment. Over 122-123 (TH) the chain is Extracellular. The chain crosses the membrane as a helical span at residues 124 to 140 (FILNTASLLSVLIPKMP). The Cytoplasmic portion of the chain corresponds to 141 to 153 (QLHGVRIFGINKY).

The protein belongs to the ORM family. In terms of assembly, ceramide-sensitive subunit of the serine palmitoyltransferase (SPT) complex, which is also composed of SPTLC1, SPTLC2/3 and SPTSSA/B.

The protein localises to the endoplasmic reticulum membrane. Plays an essential role in the homeostatic regulation of sphingolipid de novo biosynthesis by modulating the activity of the serine palmitoyltransferase (SPT) in response to ceramide levels. When complexed to SPT, the binding of ceramides to its N-terminus stabilizes a conformation that block SPT substrate entry, hence preventing SPT catalytic activity. Through this mechanism, maintains ceramide levels at sufficient concentrations for the production of complex sphingolipids, but which prevents the accumulation of ceramides to levels that trigger apoptosis. The polypeptide is ORM1-like protein 1 (ORMDL1) (Bos taurus (Bovine)).